We begin with the raw amino-acid sequence, 260 residues long: Flagellar basal-body rod protein FlgG (260 aa).

It belongs to the flagella basal body rod proteins family. As to quaternary structure, the basal body constitutes a major portion of the flagellar organelle and consists of four rings (L,P,S, and M) mounted on a central rod. The rod consists of about 26 subunits of FlgG in the distal portion, and FlgB, FlgC and FlgF are thought to build up the proximal portion of the rod with about 6 subunits each.

The protein resides in the bacterial flagellum basal body. The sequence is that of Flagellar basal-body rod protein FlgG (flgG) from Escherichia coli O157:H7.